Consider the following 156-residue polypeptide: Small ribosomal subunit protein uS7c (156 aa).

This sequence belongs to the universal ribosomal protein uS7 family. As to quaternary structure, part of the 30S ribosomal subunit.

The protein localises to the plastid. It localises to the chloroplast. Functionally, one of the primary rRNA binding proteins, it binds directly to 16S rRNA where it nucleates assembly of the head domain of the 30S subunit. This is Small ribosomal subunit protein uS7c (rps7) from Nephroselmis olivacea (Green alga).